Reading from the N-terminus, the 246-residue chain is Phosphomannomutase 2 (246 aa).

An N-acetylalanine modification is found at A2. D12 functions as the Nucleophile in the catalytic mechanism. The Mg(2+) site is built by D12 and D14. D14 (proton donor/acceptor) is an active-site residue. Residues R21, R123, R134, R141, S179, and D181 each contribute to the alpha-D-mannose 1-phosphate site. Mg(2+) contacts are provided by D209, F221, D223, and T226.

The protein belongs to the eukaryotic PMM family. In terms of assembly, homodimer.

The protein resides in the cytoplasm. The enzyme catalyses alpha-D-mannose 1-phosphate = D-mannose 6-phosphate. Its pathway is nucleotide-sugar biosynthesis; GDP-alpha-D-mannose biosynthesis; alpha-D-mannose 1-phosphate from D-fructose 6-phosphate: step 2/2. Its function is as follows. Involved in the synthesis of the GDP-mannose and dolichol-phosphate-mannose required for a number of critical mannosyl transfer reactions. The sequence is that of Phosphomannomutase 2 (PMM2) from Bos taurus (Bovine).